A 301-amino-acid polypeptide reads, in one-letter code: Protein translocase subunit SecF (301 aa).

The next 6 helical transmembrane spans lie at 17–37, 137–157, 163–183, 190–210, 239–261, and 272–292; these read YIALALSCIMIILGIFAIFQI, DALFAILAATAGILIYIAIRF, IGATVATFHDVMAVLGIFYIL, IFISALLTIAGYSLTDTVVVF, LSRTIVTSLTTLMAAVALFFFGG, and ILGILVGTYSSIFVASPVVLL.

This sequence belongs to the SecD/SecF family. SecF subfamily. As to quaternary structure, forms a complex with SecD. Part of the essential Sec protein translocation apparatus which comprises SecA, SecYEG and auxiliary proteins SecDF. Other proteins may also be involved.

It localises to the cell inner membrane. Part of the Sec protein translocase complex. Interacts with the SecYEG preprotein conducting channel. SecDF uses the proton motive force (PMF) to complete protein translocation after the ATP-dependent function of SecA. The protein is Protein translocase subunit SecF of Thermodesulfovibrio yellowstonii (strain ATCC 51303 / DSM 11347 / YP87).